A 159-amino-acid polypeptide reads, in one-letter code: Dihydrofolate reductase (159 aa).

The DHFR domain maps to 2-157 (TLSILVAHDL…IPHTFLHLIR (156 aa)). 6–8 (LVA) is a binding site for substrate. Residues 7–8 (VA) and 15–20 (IGFENQ) contribute to the NADP(+) site. Asp-28 serves as a coordination point for substrate. 44 to 47 (GRKT) serves as a coordination point for NADP(+). Arg-58 provides a ligand contact to substrate. NADP(+) contacts are provided by residues 63-66 (LTSD) and 93-98 (FGGQTL). Residue Thr-112 coordinates substrate.

This sequence belongs to the dihydrofolate reductase family.

It catalyses the reaction (6S)-5,6,7,8-tetrahydrofolate + NADP(+) = 7,8-dihydrofolate + NADPH + H(+). It functions in the pathway cofactor biosynthesis; tetrahydrofolate biosynthesis; 5,6,7,8-tetrahydrofolate from 7,8-dihydrofolate: step 1/1. Functionally, key enzyme in folate metabolism. Catalyzes an essential reaction for de novo glycine and purine synthesis, and for DNA precursor synthesis. This chain is Dihydrofolate reductase (folA), found in Staphylococcus aureus (strain COL).